A 352-amino-acid polypeptide reads, in one-letter code: tRNA N6-adenosine threonylcarbamoyltransferase (352 aa).

H111 and H115 together coordinate Fe cation. Residues 133–137, D166, G179, and N275 contribute to the substrate site; that span reads LASGG. Residue D300 participates in Fe cation binding.

It belongs to the KAE1 / TsaD family. The cofactor is Fe(2+).

It is found in the cytoplasm. It carries out the reaction L-threonylcarbamoyladenylate + adenosine(37) in tRNA = N(6)-L-threonylcarbamoyladenosine(37) in tRNA + AMP + H(+). Required for the formation of a threonylcarbamoyl group on adenosine at position 37 (t(6)A37) in tRNAs that read codons beginning with adenine. Is involved in the transfer of the threonylcarbamoyl moiety of threonylcarbamoyl-AMP (TC-AMP) to the N6 group of A37, together with TsaE and TsaB. TsaD likely plays a direct catalytic role in this reaction. The polypeptide is tRNA N6-adenosine threonylcarbamoyltransferase (Treponema pallidum (strain Nichols)).